The primary structure comprises 457 residues: tRNA-2-methylthio-N(6)-dimethylallyladenosine synthase (457 aa).

An MTTase N-terminal domain is found at 3–120; the sequence is KKVYVKTFGC…LPQMIDARRT (118 aa). Residues cysteine 12, cysteine 49, cysteine 83, cysteine 157, cysteine 161, and cysteine 164 each contribute to the [4Fe-4S] cluster site. A Radical SAM core domain is found at 143-377; the sequence is RVEGPTAFVS…QATIEENVAR (235 aa). One can recognise a TRAM domain in the interval 380-447; it reads QSMVGKVERI…PHSLRGELVL (68 aa).

Belongs to the methylthiotransferase family. MiaB subfamily. Monomer. [4Fe-4S] cluster is required as a cofactor.

The protein resides in the cytoplasm. It catalyses the reaction N(6)-dimethylallyladenosine(37) in tRNA + (sulfur carrier)-SH + AH2 + 2 S-adenosyl-L-methionine = 2-methylsulfanyl-N(6)-dimethylallyladenosine(37) in tRNA + (sulfur carrier)-H + 5'-deoxyadenosine + L-methionine + A + S-adenosyl-L-homocysteine + 2 H(+). In terms of biological role, catalyzes the methylthiolation of N6-(dimethylallyl)adenosine (i(6)A), leading to the formation of 2-methylthio-N6-(dimethylallyl)adenosine (ms(2)i(6)A) at position 37 in tRNAs that read codons beginning with uridine. The protein is tRNA-2-methylthio-N(6)-dimethylallyladenosine synthase of Burkholderia multivorans (strain ATCC 17616 / 249).